The chain runs to 37 residues: Ferredoxin--NADP reductase, chloroplastic (37 aa).

NADP(+)-binding positions include Ser3 and 24–25; that span reads SR.

The protein belongs to the ferredoxin--NADP reductase type 1 family. The cofactor is FAD.

The protein localises to the plastid. The protein resides in the chloroplast stroma. Its subcellular location is the chloroplast thylakoid membrane. It carries out the reaction 2 reduced [2Fe-2S]-[ferredoxin] + NADP(+) + H(+) = 2 oxidized [2Fe-2S]-[ferredoxin] + NADPH. It functions in the pathway energy metabolism; photosynthesis. May play a key role in regulating the relative amounts of cyclic and non-cyclic electron flow to meet the demands of the plant for ATP and reducing power. This chain is Ferredoxin--NADP reductase, chloroplastic, found in Imperata cylindrica (Cogon grass).